The following is a 172-amino-acid chain: Small ribosomal subunit protein uS5 (172 aa).

The 64-residue stretch at 17-80 (LREKMIAVNR…DEARRKMVKV (64 aa)) folds into the S5 DRBM domain.

This sequence belongs to the universal ribosomal protein uS5 family. Part of the 30S ribosomal subunit. Contacts proteins S4 and S8.

In terms of biological role, with S4 and S12 plays an important role in translational accuracy. Functionally, located at the back of the 30S subunit body where it stabilizes the conformation of the head with respect to the body. This Ralstonia nicotianae (strain ATCC BAA-1114 / GMI1000) (Ralstonia solanacearum) protein is Small ribosomal subunit protein uS5.